The sequence spans 176 residues: MKASGTLREYKVVGRCLPTPKSPAPPLYRMRIFAPNHVVAKSRFWYFVSQLKKMKKSSGEIVYCGQVFEKSPLRVKNFGIWLRYDSRSGTHNMYREYRDLTTAGAVTQCYRDMGARHRARAHSIQVMKVEEMAAARCRRPAVKQFHDSRIRFPLPHRVLRRQHKPRFSAKRPNTFF.

Residue Lys11 forms a Glycyl lysine isopeptide (Lys-Gly) (interchain with G-Cter in SUMO2) linkage. Tyr63 carries the post-translational modification Phosphotyrosine. Ser71 is subject to Phosphoserine. Position 76 is an N6-succinyllysine (Lys76). Ser123 is modified (phosphoserine). Residues Lys128 and Lys170 each participate in a glycyl lysine isopeptide (Lys-Gly) (interchain with G-Cter in SUMO2) cross-link.

The protein belongs to the eukaryotic ribosomal protein eL20 family. As to quaternary structure, component of the large ribosomal subunit. Binds IPO9 with high affinity.

It is found in the cytoplasm. Functionally, component of the large ribosomal subunit. The ribosome is a large ribonucleoprotein complex responsible for the synthesis of proteins in the cell. This is Large ribosomal subunit protein eL20 (RPL18A) from Oryctolagus cuniculus (Rabbit).